The chain runs to 252 residues: Ribosomal RNA small subunit methyltransferase A (252 aa).

Positions 11, 13, 38, 60, 82, and 99 each coordinate S-adenosyl-L-methionine.

The protein belongs to the class I-like SAM-binding methyltransferase superfamily. rRNA adenine N(6)-methyltransferase family. RsmA subfamily.

The protein localises to the cytoplasm. It carries out the reaction adenosine(1518)/adenosine(1519) in 16S rRNA + 4 S-adenosyl-L-methionine = N(6)-dimethyladenosine(1518)/N(6)-dimethyladenosine(1519) in 16S rRNA + 4 S-adenosyl-L-homocysteine + 4 H(+). Its function is as follows. Specifically dimethylates two adjacent adenosines (A1518 and A1519) in the loop of a conserved hairpin near the 3'-end of 16S rRNA in the 30S particle. May play a critical role in biogenesis of 30S subunits. The polypeptide is Ribosomal RNA small subunit methyltransferase A (Hydrogenobaculum sp. (strain Y04AAS1)).